The primary structure comprises 211 residues: Large ribosomal subunit protein bL25 (211 aa).

Residues 185–211 form a disordered region; sequence ESTTPAATEGEETEAAAAAPEPAAEDK. Residues 199–211 show a composition bias toward low complexity; sequence AAAAAPEPAAEDK.

This sequence belongs to the bacterial ribosomal protein bL25 family. CTC subfamily. Part of the 50S ribosomal subunit; part of the 5S rRNA/L5/L18/L25 subcomplex. Contacts the 5S rRNA. Binds to the 5S rRNA independently of L5 and L18.

This is one of the proteins that binds to the 5S RNA in the ribosome where it forms part of the central protuberance. The protein is Large ribosomal subunit protein bL25 of Treponema denticola (strain ATCC 35405 / DSM 14222 / CIP 103919 / JCM 8153 / KCTC 15104).